Here is a 493-residue protein sequence, read N- to C-terminus: Glutamyl-tRNA(Gln) amidotransferase subunit A (493 aa).

Catalysis depends on charge relay system residues K79 and S159. S183 (acyl-ester intermediate) is an active-site residue.

This sequence belongs to the amidase family. GatA subfamily. In terms of assembly, heterotrimer of A, B and C subunits.

The catalysed reaction is L-glutamyl-tRNA(Gln) + L-glutamine + ATP + H2O = L-glutaminyl-tRNA(Gln) + L-glutamate + ADP + phosphate + H(+). Functionally, allows the formation of correctly charged Gln-tRNA(Gln) through the transamidation of misacylated Glu-tRNA(Gln) in organisms which lack glutaminyl-tRNA synthetase. The reaction takes place in the presence of glutamine and ATP through an activated gamma-phospho-Glu-tRNA(Gln). The sequence is that of Glutamyl-tRNA(Gln) amidotransferase subunit A from Brucella suis (strain ATCC 23445 / NCTC 10510).